Reading from the N-terminus, the 107-residue chain is Parvalbumin beta (107 aa).

S1 carries the post-translational modification N-acetylserine. 2 EF-hand domains span residues 37 to 72 (KSLDDVKKAFYVIDQDKSGFIEEDELKLFLQNFSPS) and 76 to 107 (LTDAETKAFLADGDKDGDGMIGVDEFAAMIKA). Positions 50, 52, 54, 56, 58, 61, 89, 91, 93, 95, and 100 each coordinate Ca(2+).

The protein belongs to the parvalbumin family.

In muscle, parvalbumin is thought to be involved in relaxation after contraction. It binds two calcium ions. The chain is Parvalbumin beta from Esox lucius (Northern pike).